A 942-amino-acid chain; its full sequence is Protein ZDS2 (942 aa).

The tract at residues 1–28 (MVLMEDMQNKDGHNTVENSSGGTDSNNN) is disordered. Positions 15-28 (TVENSSGGTDSNNN) are enriched in polar residues. S50 carries the post-translational modification Phosphoserine. Disordered regions lie at residues 91–142 (SRNS…DDSI), 483–541 (SQES…NSSN), 617–654 (VVSSSESQPSKPTAPAVVEKKVELPTDTQASTHKKNSL), 682–728 (VKKE…DIDT), and 788–817 (SRDTTAGLEEDIGAEREDNTSPTAPQISTL). Basic and acidic residues predominate over residues 99 to 122 (SSKESLQESLHEENIIRSEQKEEQ). The span at 123-134 (GSEDNDAYEEGD) shows a compositional bias: acidic residues. Composition is skewed to low complexity over residues 483-497 (SQESSLLSTDSSNNS), 518-541 (SSSEKSNTNNSEANHGWSWLNSSN), and 617-627 (VVSSSESQPSK). Basic residues predominate over residues 682–704 (VKKELKKKASHSSLSKFRKSPKK). The segment covering 807–816 (TSPTAPQIST) has biased composition (polar residues).

To yeast ZDS1/NRC1/CES1. Interacts with SKG6.

Its function is as follows. Acts as a negative regulator of polarized growth via an alternative mechanism to ZDS1. In heat-stressed cells appears to play a role in localizing BCY1 to the cytoplasm. Seems to interact with, and down-regulate, CDC42. Also acts as a suppressor of PKC1. May act as an integration point for distinct signaling pathways helping to maintain a balance among these different pathways. This Saccharomyces cerevisiae (strain ATCC 204508 / S288c) (Baker's yeast) protein is Protein ZDS2 (ZDS2).